The sequence spans 85 residues: Colicin E3 immunity protein (85 aa).

Belongs to the cloacin immunity protein family. In terms of assembly, native colicin E3 is a 1:1 complex of A chain and protein B (Im3). Binds between the translocation and cytotoxic RNase domains of intact ColE3, blocking access to the 16S rRNA substrate. Forms a very tight 1:1 complex with the cytotoxic fragment (residues 456-551) of ColE3 (ceaC).

The cognate immunity protein for colicin E3 (ColE3), protects cells which harbor the plasmid ColE3 against the toxic action of ColE3. This protein inhibits the 16S RNA hydrolyzing activity of ColE3 by binding with very high affinity to the C-terminal catalytic domain of ColE3. The chain is Colicin E3 immunity protein from Escherichia coli.